The primary structure comprises 530 residues: G2/mitotic-specific cyclin-B (530 aa).

The tract at residues 76-152 is disordered; sequence ARVDSHWKKQ…EPTLKREDSN (77 aa). Residues 121–144 show a composition bias toward low complexity; sequence PTKTTVEPTKVTVKSSSSENVNEP. Serine 137 carries the post-translational modification Phosphoserine.

It belongs to the cyclin family. Cyclin AB subfamily. As to quaternary structure, interacts with the protein kinase Cdk1 to form a serine/threonine kinase holoenzyme complex also known as maturation promoting factor (MPF). The cyclin subunit imparts substrate specificity to the complex.

Functionally, essential for the control of the cell cycle at the G2/M (mitosis) transition. This Drosophila melanogaster (Fruit fly) protein is G2/mitotic-specific cyclin-B (CycB).